Here is a 112-residue protein sequence, read N- to C-terminus: Class I hydrophobin 7 (112 aa).

The N-terminal stretch at methionine 1 to alanine 23 is a signal peptide. 4 cysteine pairs are disulfide-bonded: cysteine 36–cysteine 93, cysteine 43–cysteine 87, cysteine 44–cysteine 74, and cysteine 94–cysteine 107. Residue asparagine 96 is glycosylated (N-linked (GlcNAc...) asparagine).

Belongs to the fungal hydrophobin family. Self-assembles to form functional amyloid fibrils called rodlets. Self-assembly into fibrillar rodlets occurs spontaneously at hydrophobic:hydrophilic interfaces and the rodlets further associate laterally to form amphipathic monolayers.

It localises to the secreted. Its subcellular location is the cell wall. Functionally, aerial growth, conidiation, and dispersal of filamentous fungi in the environment rely upon a capability of their secreting small amphipathic proteins called hydrophobins (HPBs) with low sequence identity. Class I can self-assemble into an outermost layer of rodlet bundles on aerial cell surfaces, conferring cellular hydrophobicity that supports fungal growth, development and dispersal; whereas Class II form highly ordered films at water-air interfaces through intermolecular interactions but contribute nothing to the rodlet structure. In Flammulina velutipes (Agaricus velutipes), this protein is Class I hydrophobin 7.